Here is a 120-residue protein sequence, read N- to C-terminus: NAD(P)H-quinone oxidoreductase subunit 3, chloroplastic (120 aa).

A run of 3 helical transmembrane segments spans residues Ile-9 to Gly-29, Met-64 to Met-84, and Val-88 to Leu-108.

The protein belongs to the complex I subunit 3 family. NDH is composed of at least 16 different subunits, 5 of which are encoded in the nucleus.

The protein resides in the plastid. The protein localises to the chloroplast thylakoid membrane. It carries out the reaction a plastoquinone + NADH + (n+1) H(+)(in) = a plastoquinol + NAD(+) + n H(+)(out). It catalyses the reaction a plastoquinone + NADPH + (n+1) H(+)(in) = a plastoquinol + NADP(+) + n H(+)(out). Its function is as follows. NDH shuttles electrons from NAD(P)H:plastoquinone, via FMN and iron-sulfur (Fe-S) centers, to quinones in the photosynthetic chain and possibly in a chloroplast respiratory chain. The immediate electron acceptor for the enzyme in this species is believed to be plastoquinone. Couples the redox reaction to proton translocation, and thus conserves the redox energy in a proton gradient. This Populus alba (White poplar) protein is NAD(P)H-quinone oxidoreductase subunit 3, chloroplastic.